We begin with the raw amino-acid sequence, 142 residues long: MEVFDMKSFLGDEVIVRQSSGYSCGPAALATVLRNLGVHCSEAELAELAGTDESGTTMYGLILAATSKGVSARGVRMEISDLRRNHIAFVRYGDTAHYTVVLSVDDRNITLADPAMGRIRIRRDIFSKIFTGNVLVVEREED.

Residues 18–137 form the Peptidase C39 domain; the sequence is QSSGYSCGPA…KIFTGNVLVV (120 aa).

This is an uncharacterized protein from Methanothermobacter marburgensis (strain ATCC BAA-927 / DSM 2133 / JCM 14651 / NBRC 100331 / OCM 82 / Marburg) (Methanobacterium thermoautotrophicum).